Consider the following 180-residue polypeptide: ATP-dependent protease subunit HslV (180 aa).

The active site involves Thr-6. Ala-164, Cys-167, and Thr-170 together coordinate Na(+).

It belongs to the peptidase T1B family. HslV subfamily. A double ring-shaped homohexamer of HslV is capped on each side by a ring-shaped HslU homohexamer. The assembly of the HslU/HslV complex is dependent on binding of ATP.

It is found in the cytoplasm. It catalyses the reaction ATP-dependent cleavage of peptide bonds with broad specificity.. Allosterically activated by HslU binding. In terms of biological role, protease subunit of a proteasome-like degradation complex believed to be a general protein degrading machinery. This Borrelia turicatae (strain 91E135) protein is ATP-dependent protease subunit HslV.